The sequence spans 209 residues: Thymidylate kinase (209 aa).

ATP is bound at residue 13–20; it reads GLEGAGKS.

Belongs to the thymidylate kinase family.

It carries out the reaction dTMP + ATP = dTDP + ADP. Phosphorylation of dTMP to form dTDP in both de novo and salvage pathways of dTTP synthesis. In Shewanella sp. (strain ANA-3), this protein is Thymidylate kinase.